The following is a 129-amino-acid chain: Serum amyloid A-2 protein (129 aa).

Residues 1–18 (MKLFTGLIFCSLVLGVHS) form the signal peptide. A Pyrrolidone carboxylic acid modification is found at Gln19. The segment covering 90 to 103 (KHGDSGHGVEDSRA) has biased composition (basic and acidic residues). The interval 90-129 (KHGDSGHGVEDSRADQAANEWGRSGKDPNHFRPPGLPDKY) is disordered.

The protein belongs to the SAA family. As to quaternary structure, apolipoprotein of the HDL complex.

The protein resides in the secreted. Functionally, major acute phase reactant. This is Serum amyloid A-2 protein from Sus scrofa (Pig).